The chain runs to 290 residues: UPF0761 membrane protein YihY (290 aa).

Transmembrane regions (helical) follow at residues 44–64 (LLSL…FPMF), 104–124 (VGAC…DSAL), 140–160 (FAVY…SLAI), 183–203 (IFPL…VPTI), 210–230 (AIVG…GFAL), and 244–264 (VLAV…IVLL).

The protein belongs to the UPF0761 family.

The protein localises to the cell inner membrane. This chain is UPF0761 membrane protein YihY, found in Shigella boydii serotype 4 (strain Sb227).